Consider the following 247-residue polypeptide: Adenosylcobinamide-GDP ribazoletransferase (247 aa).

5 helical membrane-spanning segments follow: residues 1 to 21, 37 to 57, 61 to 81, 109 to 129, and 176 to 196; these read MLRL…PFSF, LVGL…ALAL, VADL…HLDG, AVGV…LFAV, and VAVA…LPGI.

The protein belongs to the CobS family. Mg(2+) serves as cofactor.

Its subcellular location is the cell inner membrane. It catalyses the reaction alpha-ribazole + adenosylcob(III)inamide-GDP = adenosylcob(III)alamin + GMP + H(+). The catalysed reaction is alpha-ribazole 5'-phosphate + adenosylcob(III)inamide-GDP = adenosylcob(III)alamin 5'-phosphate + GMP + H(+). Its pathway is cofactor biosynthesis; adenosylcobalamin biosynthesis; adenosylcobalamin from cob(II)yrinate a,c-diamide: step 7/7. Its function is as follows. Joins adenosylcobinamide-GDP and alpha-ribazole to generate adenosylcobalamin (Ado-cobalamin). Also synthesizes adenosylcobalamin 5'-phosphate from adenosylcobinamide-GDP and alpha-ribazole 5'-phosphate. In Geotalea daltonii (strain DSM 22248 / JCM 15807 / FRC-32) (Geobacter daltonii), this protein is Adenosylcobinamide-GDP ribazoletransferase.